Reading from the N-terminus, the 337-residue chain is Phosphate acyltransferase (337 aa).

The protein belongs to the PlsX family. Homodimer. Probably interacts with PlsY.

The protein resides in the cytoplasm. The catalysed reaction is a fatty acyl-[ACP] + phosphate = an acyl phosphate + holo-[ACP]. Its pathway is lipid metabolism; phospholipid metabolism. In terms of biological role, catalyzes the reversible formation of acyl-phosphate (acyl-PO(4)) from acyl-[acyl-carrier-protein] (acyl-ACP). This enzyme utilizes acyl-ACP as fatty acyl donor, but not acyl-CoA. The chain is Phosphate acyltransferase from Aquifex aeolicus (strain VF5).